A 21-amino-acid chain; its full sequence is thr operon leader peptide (21 aa).

Belongs to the thr operon leader peptide family.

Its function is as follows. This protein is involved in control of the biosynthesis of threonine. The polypeptide is thr operon leader peptide (Shigella boydii serotype 18 (strain CDC 3083-94 / BS512)).